The primary structure comprises 837 residues: Striatin-interacting protein 1 (837 aa).

Position 1 is an N-acetylmethionine (Met-1). 2 disordered regions span residues 1-67 (MEPA…ESPD) and 333-423 (AASP…KGLP). Over residues 18-35 (PQPPPPPPPATAQPPPGA) the composition is skewed to pro residues. A compositionally biased stretch (basic and acidic residues) spans 47-60 (KAREFNRNQRKDSE). Ser-59, Ser-335, and Ser-339 each carry phosphoserine. The segment covering 356 to 377 (KALIKQDNLDAFNERDPYKADD) has biased composition (basic and acidic residues). The span at 378-391 (SREEEEENDDDSSL) shows a compositional bias: acidic residues. Ser-788 carries the phosphoserine modification. The segment at 796 to 837 (DNCLQSVLGQRVDLPEDFQMNYDLWLEREVFSKPISWEELLQ) is required for STRIPAK core complex formation.

It belongs to the STRIP family. As to quaternary structure, part of the core of STRIPAK complexes composed of PP2A catalytic and scaffolding subunits, the striatins (PP2A regulatory subunits), the striatin-associated proteins MOB4, STRIP1 and STRIP2, PDCD10 and members of the STE20 kinases, such as STK24 and STK26. The STRIPAK complex can be extended by adapter proteins such as SLMAP:SIKE1, CTTNBP2 or CTTNBP2NL. Interacts with CDC42BPB. Interacts with CTTNBP2NL.

The protein localises to the cytoplasm. Functionally, plays a role in the regulation of cell morphology and cytoskeletal organization. Required in the cortical actin filament dynamics and cell shape. Part of the striatin-interacting phosphatase and kinase (STRIPAK) complexes. STRIPAK complexes have critical roles in protein (de)phosphorylation and are regulators of multiple signaling pathways including Hippo, MAPK, nuclear receptor and cytoskeleton remodeling. Different types of STRIPAK complexes are involved in a variety of biological processes such as cell growth, differentiation, apoptosis, metabolism and immune regulation. The sequence is that of Striatin-interacting protein 1 (Strip1) from Mus musculus (Mouse).